The following is a 93-amino-acid chain: Small ribosomal subunit protein uS17 (93 aa).

Belongs to the universal ribosomal protein uS17 family. In terms of assembly, part of the 30S ribosomal subunit.

Its function is as follows. One of the primary rRNA binding proteins, it binds specifically to the 5'-end of 16S ribosomal RNA. This is Small ribosomal subunit protein uS17 from Bordetella avium (strain 197N).